The following is a 210-amino-acid chain: Resolvase (210 aa).

The 145-residue stretch at 6–150 (VARVYLRVSS…EDRRERQRQG (145 aa)) folds into the Resolvase/invertase-type recombinase catalytic domain. Ser-14 (O-(5'-phospho-DNA)-serine intermediate) is an active-site residue. The H-T-H motif DNA-binding region spans 191–210 (GVSVSQVKRVWAQNQTKDKV).

The protein belongs to the site-specific recombinase resolvase family.

Functionally, site-specific recombination protein. The chain is Resolvase (stbA) from Pseudomonas syringae pv. tomato.